A 329-amino-acid polypeptide reads, in one-letter code: Sulfate-binding protein (329 aa).

The first 19 residues, 1–19 (MKKWGVGFTLLLASTSILA), serve as a signal peptide directing secretion.

Belongs to the prokaryotic sulfate-binding protein family.

Its subcellular location is the periplasm. In terms of biological role, this protein specifically binds sulfate and is involved in its transmembrane transport. In Salmonella typhimurium (strain LT2 / SGSC1412 / ATCC 700720), this protein is Sulfate-binding protein (sbp).